The following is a 146-amino-acid chain: Heat-stable 19 kDa antigen (146 aa).

The first 20 residues, 1–20 (MKFSLLSAIAAAVFVPFTSA), serve as a signal peptide directing secretion.

The protein belongs to the cerato-platanin family. Glycosylated.

The protein localises to the secreted. The polypeptide is Heat-stable 19 kDa antigen (CSA) (Coccidioides immitis (strain RS) (Valley fever fungus)).